The chain runs to 207 residues: DNA-directed RNA polymerase subunit alpha (207 aa).

It belongs to the RNA polymerase alpha chain family. As to quaternary structure, in plastids the minimal PEP RNA polymerase catalytic core is composed of four subunits: alpha, beta, beta', and beta''. When a (nuclear-encoded) sigma factor is associated with the core the holoenzyme is formed, which can initiate transcription.

It localises to the plastid. The protein localises to the chloroplast. The enzyme catalyses RNA(n) + a ribonucleoside 5'-triphosphate = RNA(n+1) + diphosphate. In terms of biological role, DNA-dependent RNA polymerase catalyzes the transcription of DNA into RNA using the four ribonucleoside triphosphates as substrates. In Euglena myxocylindracea, this protein is DNA-directed RNA polymerase subunit alpha (rpoA).